Reading from the N-terminus, the 120-residue chain is NAD(P)H-quinone oxidoreductase subunit 3, chloroplastic (120 aa).

The next 3 membrane-spanning stretches (helical) occupy residues 9-29 (IFWAFLVISSVIPILAFIISG), 64-84 (MFALVFVVFDVETVFLYPWAM), and 88-108 (VLGVSVFIEALIFVLILIVGS).

This sequence belongs to the complex I subunit 3 family. In terms of assembly, NDH is composed of at least 16 different subunits, 5 of which are encoded in the nucleus.

It is found in the plastid. Its subcellular location is the chloroplast thylakoid membrane. It carries out the reaction a plastoquinone + NADH + (n+1) H(+)(in) = a plastoquinol + NAD(+) + n H(+)(out). The enzyme catalyses a plastoquinone + NADPH + (n+1) H(+)(in) = a plastoquinol + NADP(+) + n H(+)(out). Its function is as follows. NDH shuttles electrons from NAD(P)H:plastoquinone, via FMN and iron-sulfur (Fe-S) centers, to quinones in the photosynthetic chain and possibly in a chloroplast respiratory chain. The immediate electron acceptor for the enzyme in this species is believed to be plastoquinone. Couples the redox reaction to proton translocation, and thus conserves the redox energy in a proton gradient. In Lemna minor (Common duckweed), this protein is NAD(P)H-quinone oxidoreductase subunit 3, chloroplastic.